The chain runs to 412 residues: NF-kappa-B essential modulator (412 aa).

The interval 1 to 48 (MNKHPWKNQLSEMVQPSGGPAEDQDMLGEESSLGKPAMLHLPSEQGTP) is disordered. Positions 1-197 (MNKHPWKNQL…REVLQQQHSV (197 aa)) are required for interaction with and ubiquitination by MARCHF2. Phosphoserine; by IKKB occurs at positions 31 and 43. Residues 44–111 (EQGTPETLQR…KLVERLSLEK (68 aa)) are interaction with CHUK/IKBKB. Residues 49 to 345 (ETLQRCLEEN…LKVGCHESAR (297 aa)) are a coiled coil. A Phosphoserine modification is found at serine 68. Serine 85 is modified (phosphoserine; by ATM). Glycyl lysine isopeptide (Lys-Gly) (interchain with G-Cter in ubiquitin) cross-links involve residues lysine 111, lysine 139, lysine 143, lysine 226, and lysine 246. The segment at 150-250 (LGELQESQSR…YDSHIKSSKG (101 aa)) is interaction with TANK. The segment at 242–343 (DSHIKSSKGM…NKLKVGCHES (102 aa)) is ubiquitin-binding (UBAN). The self-association stretch occupies residues 246–358 (KSSKGMQLED…MRKRHVETPQ (113 aa)). Positions 249–412 (KGMQLEDLRQ…LQIHVMECIE (164 aa)) are required for interaction with TNFAIP3. The segment at 250 to 339 (GMQLEDLRQQ…QREFNKLKVG (90 aa)) is linear polyubiquitin-binding, does not bind to 'Lys-63'-linked polyubiquitin. Lysine 270 participates in a covalent cross-link: Glycyl lysine isopeptide (Lys-Gly) (interchain with G-Cter in SUMO); alternate. Residue lysine 270 forms a Glycyl lysine isopeptide (Lys-Gly) (interchain with G-Cter in ubiquitin); alternate linkage. Residues lysine 276, lysine 278, lysine 285, and lysine 295 each participate in a glycyl lysine isopeptide (Lys-Gly) (interchain with G-Cter in ubiquitin) cross-link. Residue lysine 302 forms a Glycyl lysine isopeptide (Lys-Gly) (interchain with G-Cter in SUMO); alternate linkage. Lysine 302 is covalently cross-linked (Glycyl lysine isopeptide (Lys-Gly) (interchain with G-Cter in ubiquitin); alternate). Residues lysine 314, lysine 318, and lysine 319 each participate in a glycyl lysine isopeptide (Lys-Gly) (interchain with G-Cter in ubiquitin) cross-link. Residues 315–336 (LVEKKEYLQEQLEQLQREFNKL) form a leucine-zipper region. Serine 369 is modified (phosphoserine; by IKKB). Residues 375-412 (SNQRRSPPEEPPDFCCPKCQYQAPDMDTLQIHVMECIE) form an interaction with CYLD region. Serine 380 is subject to Phosphoserine. A CCHC NOA-type zinc finger spans residues 382 to 412 (PEEPPDFCCPKCQYQAPDMDTLQIHVMECIE). Cysteine 390 is a binding site for Zn(2+). Residue lysine 392 forms a Glycyl lysine isopeptide (Lys-Gly) (interchain with G-Cter in ubiquitin) linkage. Zn(2+) contacts are provided by cysteine 393, histidine 406, and cysteine 410.

As to quaternary structure, homodimer; disulfide-linked. Component of the I-kappa-B-kinase (IKK) core complex consisting of CHUK, IKBKB and IKBKG; probably four alpha/CHUK-beta/IKBKB dimers are associated with four gamma/IKBKG subunits. The IKK core complex seems to associate with regulatory or adapter proteins to form a IKK-signalosome holo-complex. The IKK complex associates with TERF2IP/RAP1, leading to promote IKK-mediated phosphorylation of RELA/p65. Part of a complex composed of NCOA2, NCOA3, CHUK/IKKA, IKBKB, IKBKG and CREBBP. Interacts with COPS3, CYLD, NALP2, TRPC4AP and PIDD1. Interacts with ATM; the complex is exported from the nucleus. Interacts with TRAF6. Interacts with IKBKE. Interacts with TANK; the interaction is enhanced by IKBKE and TBK1. Part of a ternary complex consisting of TANK, IKBKB and IKBKG. Interacts with ZFAND5. Interacts with RIPK2. Interacts with TNIP1 and TNFAIP3; TNIP1 facilitates the TNFAIP3-mediated de-ubiquitination of IKBKG. Interacts with TNFAIP3; the interaction is induced by TNF stimulation and by polyubiquitin. Binds (via UBAN region) polyubiquitin; binds both 'Lys-63'-linked and linear polyubiquitin, with higher affinity for linear ubiquitin. Interacts with NLRP10. Interacts with TANK; this interaction increases in response to DNA damage. Interacts with USP10; this interaction increases in response to DNA damage. Interacts with ZC3H12A; this interaction increases in response to DNA damage. Interacts with IFIT5; the interaction synergizes the recruitment of IKK to MAP3K7 and enhances IKK phosphorylation. Interacts with TRIM29; this interaction induces IKBKG/NEMO ubiquitination and proteolytic degradation. Interacts with TRIM13; this interaction leads to IKBKG/NEMO ubiquitination. Interacts with ARFIP2. Interacts with RIPK1. Interacts with (ubiquitinated) BCL10; interaction with polyubiquitinated BCL10 via both 'Lys-63'-linked and linear ubiquitin is required for TCR-induced NF-kappa-B activation. Interacts with MARCHF2; during the late stages of macrophage viral and bacterial infection; the interaction leads to ubiquitination and degradation of IKBKG/NEMO. Phosphorylation at Ser-68 attenuates aminoterminal homodimerization. In terms of processing, polyubiquitinated on Lys-278 via 'Lys-63'-linked ubiquitin; the ubiquitination is mediated downstream of NOD2 and RIPK2 and probably plays a role in signaling by facilitating interactions with ubiquitin domain-containing proteins and activates the NF-kappa-B pathway. Polyubiquitinated on Lys-278 and Lys-302 through 'Lys-63'-linked ubiquitin; the ubiquitination is mediated by BCL10, MALT1 and TRAF6 and probably plays a role in signaling by facilitating interactions with ubiquitin domain-containing proteins and activates the NF-kappa-B pathway. Monoubiquitinated on Lys-270 and Lys-302; promotes nuclear export. Polyubiquitinated through 'Lys-27' by TRIM23; involved in antiviral innate and inflammatory responses. Linear polyubiquitinated on Lys-111, Lys-143, Lys-226, Lys-246, Lys-270, Lys-278, Lys-285, Lys-295, Lys-302 and Lys-319; the head-to-tail polyubiquitination is mediated by the LUBAC complex and plays a key role in NF-kappa-B activation. Deubiquitinated by USP10 in a TANK-dependent and -independent manner, leading to the negative regulation of NF-kappa-B signaling upon DNA damage. Ubiquitinated at Lys-319 by MARCHF2 following bacterial and viral infection which leads to its degradation. Polyubiquitinated via 'Lys-29'-linked ubiquitin; leading to lysosomal degradation. Post-translationally, sumoylated on Lys-270 and Lys-302 with SUMO1; the modification results in phosphorylation of Ser-85 by ATM leading to a replacement of the sumoylation by mono-ubiquitination on these residues. Neddylated by TRIM40, resulting in stabilization of NFKBIA and down-regulation of NF-kappa-B activity.

Its subcellular location is the cytoplasm. It localises to the nucleus. Its function is as follows. Regulatory subunit of the IKK core complex which phosphorylates inhibitors of NF-kappa-B thus leading to the dissociation of the inhibitor/NF-kappa-B complex and ultimately the degradation of the inhibitor. Its binding to scaffolding polyubiquitin plays a key role in IKK activation by multiple signaling receptor pathways. Can recognize and bind both 'Lys-63'-linked and linear polyubiquitin upon cell stimulation, with a much highr affinity for linear polyubiquitin. Could be implicated in NF-kappa-B-mediated protection from cytokine toxicity. Essential for viral activation of IRF3. Involved in TLR3- and IFIH1-mediated antiviral innate response; this function requires 'Lys-27'-linked polyubiquitination. The chain is NF-kappa-B essential modulator (Ikbkg) from Mus musculus (Mouse).